The primary structure comprises 347 residues: Tryptophan--tRNA ligase (347 aa).

ATP is bound by residues 10–12 and 18–19; these read QAS and GN. A 'HIGH' region motif is present at residues 11-19; that stretch reads ASGRQHLGN. Asp-140 provides a ligand contact to L-tryptophan. ATP contacts are provided by residues 152–154, Ile-191, and 200–204; these read GND and KMSKS. A 'KMSKS' region motif is present at residues 200 to 204; it reads KMSKS.

This sequence belongs to the class-I aminoacyl-tRNA synthetase family. Homodimer.

The protein resides in the cytoplasm. The catalysed reaction is tRNA(Trp) + L-tryptophan + ATP = L-tryptophyl-tRNA(Trp) + AMP + diphosphate + H(+). Catalyzes the attachment of tryptophan to tRNA(Trp). The protein is Tryptophan--tRNA ligase of Mycoplasma genitalium (strain ATCC 33530 / DSM 19775 / NCTC 10195 / G37) (Mycoplasmoides genitalium).